The chain runs to 598 residues: Aspartate--tRNA(Asp/Asn) ligase (598 aa).

E174 is an L-aspartate binding site. Residues 198–201 (QQLK) are aspartate. L-aspartate is bound at residue R220. Residues 220–222 (RDE) and Q229 contribute to the ATP site. H458 provides a ligand contact to L-aspartate. ATP is bound at residue E492. An L-aspartate-binding site is contributed by R499. An ATP-binding site is contributed by 544–547 (GIDR).

The protein belongs to the class-II aminoacyl-tRNA synthetase family. Type 1 subfamily. Homodimer.

The protein resides in the cytoplasm. It catalyses the reaction tRNA(Asx) + L-aspartate + ATP = L-aspartyl-tRNA(Asx) + AMP + diphosphate. In terms of biological role, aspartyl-tRNA synthetase with relaxed tRNA specificity since it is able to aspartylate not only its cognate tRNA(Asp) but also tRNA(Asn). Reaction proceeds in two steps: L-aspartate is first activated by ATP to form Asp-AMP and then transferred to the acceptor end of tRNA(Asp/Asn). This Dehalococcoides mccartyi (strain ATCC BAA-2100 / JCM 16839 / KCTC 5957 / BAV1) protein is Aspartate--tRNA(Asp/Asn) ligase.